The following is a 138-amino-acid chain: Basic phospholipase A2 homolog Tbo-K49 (138 aa).

The N-terminal stretch at 1–16 is a signal peptide; the sequence is MRTLWIMAVLLVGVEG. Cystine bridges form between Cys42-Cys131, Cys44-Cys60, Cys59-Cys111, Cys65-Cys138, Cys66-Cys104, and Cys91-Cys102. The tract at residues 121–133 is important for membrane-damaging activities in eukaryotes and bacteria; heparin-binding; sequence KKERINTKIFCKK.

As to quaternary structure, monomer. Expressed by the venom gland.

The protein localises to the secreted. In terms of biological role, snake venom phospholipase A2 homolog that lacks catalytic activity. It induces local edema. Is myotoxic. A model of myotoxic mechanism has been proposed: an apo Lys49-PLA2 is activated by the entrance of a hydrophobic molecule (e.g. fatty acid) at the hydrophobic channel of the protein leading to a reorientation of a monomer. This reorientation causes a transition between 'inactive' to 'active' states, causing alignment of C-terminal and membrane-docking sites (MDoS) side-by-side and putting the membrane-disruption sites (MDiS) in the same plane, exposed to solvent and in a symmetric position for both monomers. The MDoS region stabilizes the toxin on membrane by the interaction of charged residues with phospholipid head groups. Subsequently, the MDiS region destabilizes the membrane with penetration of hydrophobic residues. This insertion causes a disorganization of the membrane, allowing an uncontrolled influx of ions (i.e. calcium and sodium), and eventually triggering irreversible intracellular alterations and cell death. This chain is Basic phospholipase A2 homolog Tbo-K49, found in Craspedocephalus borneensis (Borneo pit viper).